A 339-amino-acid chain; its full sequence is RNA 3'-terminal phosphate cyclase (339 aa).

Residues Gln101 and 283–286 each bind ATP; that span reads HMSD. Residue His307 is the Tele-AMP-histidine intermediate of the active site.

Belongs to the RNA 3'-terminal cyclase family. Type 1 subfamily.

It is found in the cytoplasm. It carries out the reaction a 3'-end 3'-phospho-ribonucleotide-RNA + ATP = a 3'-end 2',3'-cyclophospho-ribonucleotide-RNA + AMP + diphosphate. Its function is as follows. Catalyzes the conversion of 3'-phosphate to a 2',3'-cyclic phosphodiester at the end of RNA. The mechanism of action of the enzyme occurs in 3 steps: (A) adenylation of the enzyme by ATP; (B) transfer of adenylate to an RNA-N3'P to produce RNA-N3'PP5'A; (C) and attack of the adjacent 2'-hydroxyl on the 3'-phosphorus in the diester linkage to produce the cyclic end product. The biological role of this enzyme is unknown but it is likely to function in some aspects of cellular RNA processing. The polypeptide is RNA 3'-terminal phosphate cyclase (Sulfurisphaera tokodaii (strain DSM 16993 / JCM 10545 / NBRC 100140 / 7) (Sulfolobus tokodaii)).